We begin with the raw amino-acid sequence, 268 residues long: Zinc transporter ZupT (268 aa).

Helical transmembrane passes span 5–25 (ILFA…GSII), 38–58 (TVSL…EIFV), 72–92 (AGYI…ALID), 124–144 (MGLF…LATF), 152–172 (TLGI…GLAV), 187–207 (FVLS…GFFL), 211–231 (LFTE…MVYI), and 248–268 (LAIG…LLFL). Positions 136 and 139 each coordinate Fe(2+). Zn(2+)-binding residues include Glu-139 and His-164. Positions 165, 168, and 197 each coordinate Fe(2+). Glu-168 provides a ligand contact to Zn(2+).

Belongs to the ZIP transporter (TC 2.A.5) family. ZupT subfamily.

The protein resides in the cell inner membrane. The catalysed reaction is Zn(2+)(in) = Zn(2+)(out). Its function is as follows. Mediates zinc uptake. May also transport other divalent cations. This is Zinc transporter ZupT from Chlorobaculum parvum (strain DSM 263 / NCIMB 8327) (Chlorobium vibrioforme subsp. thiosulfatophilum).